The following is a 145-amino-acid chain: Large ribosomal subunit protein uL15 (145 aa).

The interval 1 to 57 (MKLNDLSPAPGSRREKHRPGRGIGSGLGKTGGRGHKGQTSRSGGTIAPGFEGGQQPL) is disordered. Residues 21–31 (RGIGSGLGKTG) show a composition bias toward gly residues.

The protein belongs to the universal ribosomal protein uL15 family. In terms of assembly, part of the 50S ribosomal subunit.

In terms of biological role, binds to the 23S rRNA. The chain is Large ribosomal subunit protein uL15 from Pseudomonas fluorescens (strain Pf0-1).